Here is a 461-residue protein sequence, read N- to C-terminus: Nuclear distribution protein PAC1 (461 aa).

In terms of domain architecture, LisH spans 9-41 (QAEELHKSIIAYLTANNLLDTANTLRAELNLNE). Positions 61 to 88 (TSVVRLQKKIMDLESRMSAMQAELDNAT) form a coiled coil. WD repeat units lie at residues 114 to 155 (SHRD…RTIK), 157 to 197 (HTRA…KNIR), 201 to 248 (GHDH…CLRT), 251 to 290 (GHTA…PETK), 312 to 355 (QYLS…LLTL), 357 to 396 (GHDN…KCIK), 401 to 446 (AHER…IRCV), and 448 to 461 (ATGG…IFAN).

This sequence belongs to the WD repeat LIS1/nudF family. Self-associates. Interacts with NDL1 and dynein.

It is found in the cytoplasm. The protein localises to the cytoskeleton. The protein resides in the spindle pole. In terms of biological role, positively regulates the activity of the minus-end directed microtubule motor protein dynein. May enhance dynein-mediated microtubule sliding by targeting dynein to the microtubule plus end. Required for nuclear migration during vegetative growth as well as development. Required for retrograde early endosome (EE) transport from the hyphal tip. Required for localization of dynein to the mitotic spindle poles. Recruits additional proteins to the dynein complex at SPBs. The sequence is that of Nuclear distribution protein PAC1 from Arthroderma benhamiae (strain ATCC MYA-4681 / CBS 112371) (Trichophyton mentagrophytes).